A 430-amino-acid chain; its full sequence is Lipoyl synthase, mitochondrial (430 aa).

The N-terminal 37 residues, 1-37 (MATSAGKLRTLYSAHSSLSSLPPSARPTLQLATLRSY), are a transit peptide targeting the mitochondrion. The segment covering 39–55 (TTTPHDSPIGNTSNTPP) has biased composition (polar residues). The disordered stretch occupies residues 39-58 (TTTPHDSPIGNTSNTPPTVK). [4Fe-4S] cluster-binding residues include Cys141, Cys146, Cys152, Cys172, Cys176, Cys179, and Ser387. Positions 155-376 (GSSKSAATAT…KERALEMGFL (222 aa)) constitute a Radical SAM core domain.

The protein belongs to the radical SAM superfamily. Lipoyl synthase family. Requires [4Fe-4S] cluster as cofactor.

The protein localises to the mitochondrion. It catalyses the reaction [[Fe-S] cluster scaffold protein carrying a second [4Fe-4S](2+) cluster] + N(6)-octanoyl-L-lysyl-[protein] + 2 oxidized [2Fe-2S]-[ferredoxin] + 2 S-adenosyl-L-methionine + 4 H(+) = [[Fe-S] cluster scaffold protein] + N(6)-[(R)-dihydrolipoyl]-L-lysyl-[protein] + 4 Fe(3+) + 2 hydrogen sulfide + 2 5'-deoxyadenosine + 2 L-methionine + 2 reduced [2Fe-2S]-[ferredoxin]. Its pathway is protein modification; protein lipoylation via endogenous pathway; protein N(6)-(lipoyl)lysine from octanoyl-[acyl-carrier-protein]: step 2/2. Catalyzes the radical-mediated insertion of two sulfur atoms into the C-6 and C-8 positions of the octanoyl moiety bound to the lipoyl domains of lipoate-dependent enzymes, thereby converting the octanoylated domains into lipoylated derivatives. In Ajellomyces capsulatus (strain G186AR / H82 / ATCC MYA-2454 / RMSCC 2432) (Darling's disease fungus), this protein is Lipoyl synthase, mitochondrial.